The following is a 267-amino-acid chain: Indole-3-glycerol phosphate synthase 1 (267 aa).

It belongs to the TrpC family.

The enzyme catalyses 1-(2-carboxyphenylamino)-1-deoxy-D-ribulose 5-phosphate + H(+) = (1S,2R)-1-C-(indol-3-yl)glycerol 3-phosphate + CO2 + H2O. It functions in the pathway amino-acid biosynthesis; L-tryptophan biosynthesis; L-tryptophan from chorismate: step 4/5. This is Indole-3-glycerol phosphate synthase 1 (trpC1) from Ralstonia nicotianae (strain ATCC BAA-1114 / GMI1000) (Ralstonia solanacearum).